The primary structure comprises 141 residues: uncharacterized protein (141 aa).

2 helical membrane-spanning segments follow: residues 64 to 84 (IAAV…IEAI) and 112 to 132 (IVGS…LVLI).

Its subcellular location is the cell membrane. This is an uncharacterized protein from Sinorhizobium fredii (strain NBRC 101917 / NGR234).